The sequence spans 94 residues: Putative pterin-4-alpha-carbinolamine dehydratase (94 aa).

This sequence belongs to the pterin-4-alpha-carbinolamine dehydratase family.

It catalyses the reaction (4aS,6R)-4a-hydroxy-L-erythro-5,6,7,8-tetrahydrobiopterin = (6R)-L-erythro-6,7-dihydrobiopterin + H2O. This is Putative pterin-4-alpha-carbinolamine dehydratase from Mycobacterium leprae (strain Br4923).